The sequence spans 274 residues: 2,3,4,5-tetrahydropyridine-2,6-dicarboxylate N-succinyltransferase (274 aa).

Substrate is bound by residues Arg-104 and Asp-141.

It belongs to the transferase hexapeptide repeat family. In terms of assembly, homotrimer.

The protein localises to the cytoplasm. The enzyme catalyses (S)-2,3,4,5-tetrahydrodipicolinate + succinyl-CoA + H2O = (S)-2-succinylamino-6-oxoheptanedioate + CoA. Its pathway is amino-acid biosynthesis; L-lysine biosynthesis via DAP pathway; LL-2,6-diaminopimelate from (S)-tetrahydrodipicolinate (succinylase route): step 1/3. The protein is 2,3,4,5-tetrahydropyridine-2,6-dicarboxylate N-succinyltransferase of Yersinia pestis.